A 256-amino-acid chain; its full sequence is Ribosomal RNA small subunit methyltransferase J (256 aa).

S-adenosyl-L-methionine is bound by residues 104 to 105 (RD), 120 to 121 (ER), 156 to 157 (SS), and aspartate 174.

The protein belongs to the methyltransferase superfamily. RsmJ family.

It is found in the cytoplasm. The catalysed reaction is guanosine(1516) in 16S rRNA + S-adenosyl-L-methionine = N(2)-methylguanosine(1516) in 16S rRNA + S-adenosyl-L-homocysteine + H(+). Functionally, specifically methylates the guanosine in position 1516 of 16S rRNA. This is Ribosomal RNA small subunit methyltransferase J from Yersinia pseudotuberculosis serotype O:3 (strain YPIII).